A 376-amino-acid chain; its full sequence is MFIDSVNLTLSSGHGGAGAVSFRREKHVILGGPDGGDGGDGGDVYLIADNNSHTLAAYKGKRALKAQNGEAGSGRRMTGKKGENLELIVPPGTAVYDAQTNELLADLTKESERVLFLKGGKGGLGNVHFKSSINQAPEYAQKGLPEETRDVRLELKLIADVGLVGFPNVGKSTLISTVSNAKPQIANYEFTTLTPKLGLVEVDEYSGFVMADIPGIIEGASDGRGLGLKFLKHIERTKILLYMLDLANHRSLKEQFVTLRGEVEKFSPELAKRDFAIALTRMDAAENLERKVGEFLQILGLSGERSNLIDEAGKAGKNLIYKQDIYEFDDSKPYFVMPISSATNQNITELKFSLLELLKKGKFQMIFAGNLTETRG.

The region spanning 1–158 is the Obg domain; the sequence is MFIDSVNLTL…RDVRLELKLI (158 aa). Residues 159–359 form the OBG-type G domain; sequence ADVGLVGFPN…LKFSLLELLK (201 aa). Residues 165–172, 190–194, 212–215, 280–283, and 340–342 contribute to the GTP site; these read GFPNVGKS, FTTLT, DIPG, TRMD, and SSA. Residues Ser-172 and Thr-192 each contribute to the Mg(2+) site.

It belongs to the TRAFAC class OBG-HflX-like GTPase superfamily. OBG GTPase family. In terms of assembly, monomer. Mg(2+) serves as cofactor.

The protein localises to the cytoplasm. An essential GTPase which binds GTP, GDP and possibly (p)ppGpp with moderate affinity, with high nucleotide exchange rates and a fairly low GTP hydrolysis rate. Plays a role in control of the cell cycle, stress response, ribosome biogenesis and in those bacteria that undergo differentiation, in morphogenesis control. The sequence is that of GTPase Obg from Campylobacter curvus (strain 525.92).